The chain runs to 277 residues: Bis(5'-nucleosyl)-tetraphosphatase, symmetrical (277 aa).

This sequence belongs to the Ap4A hydrolase family.

The enzyme catalyses P(1),P(4)-bis(5'-adenosyl) tetraphosphate + H2O = 2 ADP + 2 H(+). Functionally, hydrolyzes diadenosine 5',5'''-P1,P4-tetraphosphate to yield ADP. This chain is Bis(5'-nucleosyl)-tetraphosphatase, symmetrical, found in Bordetella bronchiseptica (strain ATCC BAA-588 / NCTC 13252 / RB50) (Alcaligenes bronchisepticus).